Reading from the N-terminus, the 827-residue chain is Villin-1 (827 aa).

The tract at residues 1 to 126 is necessary for homodimerization; it reads MTKLNAQVKG…IRKGGVASGM (126 aa). The tract at residues 1-734 is core; it reads MTKLNAQVKG…YDDLKAELGN (734 aa). The stretch at 27–76 is one Gelsolin-like 1 repeat; the sequence is MQMVPVPSSTFGSFFDGDCYVVLAIHKTSSTLSYDIHYWIGQDSSQDEQG. LPA/PIP2-binding site regions lie at residues 112 to 119 and 138 to 146; these read KQGLVIRK and RLLHVKGKR. Gelsolin-like repeat units follow at residues 148 to 188 and 265 to 309; these read VLAG…MERL and LVVR…QERS. Serine 366 carries the post-translational modification Phosphoserine. Gelsolin-like repeat units follow at residues 407-457, 528-568, and 631-672; these read DLEL…DEIA, TKAF…DERE, and FLAT…EEKK. Residues serine 735 and serine 776 each carry the phosphoserine modification. The interval 735–827 is headpiece; that stretch reads SGDWSQIADE…QNIKKEKGLF (93 aa). The HP domain occupies 761–827; the sequence is SGPLPTFPLE…QNIKKEKGLF (67 aa). An LPA/PIP2-binding site 3 region spans residues 816 to 824; it reads KQQNIKKEK.

It belongs to the villin/gelsolin family. As to quaternary structure, monomer. Homodimer; homodimerization is necessary for actin-bundling. Associates with F-actin; phosphorylation at tyrosine residues decreases the association with F-actin. Interacts (phosphorylated at C-terminus tyrosine phosphorylation sites) with PLCG1 (via the SH2 domains). Interacts (phosphorylated form) with PLCG1; the interaction is enhanced by hepatocyte growth factor (HGF). Post-translationally, phosphorylated on tyrosine residues by SRC. The unphosphorylated form increases the initial rate of actin-nucleating activity, whereas the tyrosine phosphorylated form inhibits actin-nucleating activity, enhances actin-bundling activity and enhances actin-severing activity by reducing high Ca(2+) requirements. The tyrosine phosphorylated form does not regulate actin-capping activity. Tyrosine phosphorylation is essential for cell migration: tyrosine phosphorylation sites in the N-terminus half regulate actin reorganization and cell morphology, whereas tyrosine phosphorylation sites in the C-terminus half regulate cell migration via interaction with PLCG1. Tyrosine phosphorylation is induced by epidermal growth factor (EGF) and stimulates cell migration. As to expression, expressed in small intestin, colon, kidney and enterocytes (at protein level).

Its subcellular location is the cytoplasm. It localises to the cytoskeleton. The protein localises to the cell projection. It is found in the microvillus. The protein resides in the lamellipodium. Its subcellular location is the ruffle. It localises to the filopodium tip. The protein localises to the filopodium. Functionally, epithelial cell-specific Ca(2+)-regulated actin-modifying protein that modulates the reorganization of microvillar actin filaments. Plays a role in the actin nucleation, actin filament bundle assembly, actin filament capping and severing. Binds phosphatidylinositol 4,5-bisphosphate (PIP2) and lysophosphatidic acid (LPA); binds LPA with higher affinity than PIP2. Binding to LPA increases its phosphorylation by SRC and inhibits all actin-modifying activities. Binding to PIP2 inhibits actin-capping and -severing activities but enhances actin-bundling activity. Regulates the intestinal epithelial cell morphology, cell invasion, cell migration and apoptosis. Protects against apoptosis induced by dextran sodium sulfate (DSS) in the gastrointestinal epithelium. Appears to regulate cell death by maintaining mitochondrial integrity. Enhances hepatocyte growth factor (HGF)-induced epithelial cell motility, chemotaxis and wound repair. Upon S.flexneri cell infection, its actin-severing activity enhances actin-based motility of the bacteria and plays a role during the dissemination. In Mus musculus (Mouse), this protein is Villin-1 (Vil1).